A 313-amino-acid polypeptide reads, in one-letter code: MAQLDLTGLTETSKMIVGECHVELKRCAEPPLAADEPMPKKCRRPAGPPKGFISTRGDTSPSSDNNHIHSIQSLTNGDSCVQPWDIIANAYNIHENWKQLLLPELCCLRGSEILAEYERRAITEEVYPPKMDIFAWTRYCAPESVKAVIVGQDPYANPGQAHGLAFSVKQGVAIPPSLKNILLAVKACYPSADLGNHGCLEAWSKRGVLLLNSVLTVKRGDPGSHHSVGWQFFIRNILRRLSSTTRGIVFMLWGAQAQTMYFQTDYDDRHLVLKYSHPSPLSRKPFATCTHFKEANDFLSKIGRGCIDWSLTA.

Residues 35-68 (DEPMPKKCRRPAGPPKGFISTRGDTSPSSDNNHI) form a disordered region. Over residues 56 to 68 (RGDTSPSSDNNHI) the composition is skewed to polar residues. Catalysis depends on D153, which acts as the Proton acceptor.

Belongs to the uracil-DNA glycosylase (UDG) superfamily. UNG family.

The protein localises to the host nucleus. It catalyses the reaction Hydrolyzes single-stranded DNA or mismatched double-stranded DNA and polynucleotides, releasing free uracil.. In terms of biological role, excises uracil residues from the DNA which can arise as a result of misincorporation of dUMP residues by DNA polymerase or deamination of cytosines. Therefore may reduce deleterious uracil incorporation into the viral genome, particularly in terminally differentiated cells which lack DNA repair enzymes. The polypeptide is Uracil-DNA glycosylase (MDV014) (Gallus gallus (Chicken)).